Here is a 244-residue protein sequence, read N- to C-terminus: Gas vesicle protein F (244 aa).

An N-terminus region spans residues 1-109 (MTVGLYLYGI…QLKELFAKLS (109 aa)). The C-terminus, modifed ferredoxin fold stretch occupies residues 110 to 233 (GQREVSIKIF…GDRLRIRYNN (124 aa)). The tract at residues 234–244 (LTAPYTFAQLI) is C-tail.

The protein belongs to the gas vesicle GvpF/GvpL family. As to quaternary structure, binds GvpA.

The protein resides in the gas vesicle. In terms of biological role, a minor component of the gas vesicle, may be involved in preventing GvpA aggregation during gas vesicle nucleation. Gas vesicles (GV) are hollow, gas filled proteinaceous nanostructures. During planktonic growth they allow positioning of the organism at a favorable depth for light or nutrient acquisition. This Microcystis aeruginosa (strain PCC 7806) protein is Gas vesicle protein F.